A 243-amino-acid chain; its full sequence is Type III pantothenate kinase (243 aa).

6 to 13 (DGGNTFIK) provides a ligand contact to ATP. Residues Y87 and 94-97 (GKDR) contribute to the substrate site. The active-site Proton acceptor is the D96. D117 contacts K(+). Position 120 (T120) interacts with ATP. T172 lines the substrate pocket.

It belongs to the type III pantothenate kinase family. In terms of assembly, homodimer. The cofactor is NH4(+). K(+) serves as cofactor.

The protein localises to the cytoplasm. It catalyses the reaction (R)-pantothenate + ATP = (R)-4'-phosphopantothenate + ADP + H(+). The protein operates within cofactor biosynthesis; coenzyme A biosynthesis; CoA from (R)-pantothenate: step 1/5. In terms of biological role, catalyzes the phosphorylation of pantothenate (Pan), the first step in CoA biosynthesis. This Christiangramia forsetii (strain DSM 17595 / CGMCC 1.15422 / KT0803) (Gramella forsetii) protein is Type III pantothenate kinase.